A 185-amino-acid chain; its full sequence is UPF0200 protein Mevan_0592 (185 aa).

An ATP-binding site is contributed by 8-15 (GMPGSGKS).

This sequence belongs to the UPF0200 family.

The polypeptide is UPF0200 protein Mevan_0592 (Methanococcus vannielii (strain ATCC 35089 / DSM 1224 / JCM 13029 / OCM 148 / SB)).